A 124-amino-acid chain; its full sequence is Small ribosomal subunit protein uS12c (124 aa).

2 disordered regions span residues 1-28 and 104-124; these read MPTIQQLVRSERRKIHKKTKSPALQSCP and AAGVKDRRKSRSKYGTKKPKS. 2 stretches are compositionally biased toward basic residues: residues 11 to 20 and 109 to 124; these read ERRKIHKKTK and DRRKSRSKYGTKKPKS.

This sequence belongs to the universal ribosomal protein uS12 family. As to quaternary structure, part of the 30S ribosomal subunit.

Its subcellular location is the plastid. It is found in the chloroplast. With S4 and S5 plays an important role in translational accuracy. Located at the interface of the 30S and 50S subunits. The sequence is that of Small ribosomal subunit protein uS12c (rps12) from Pyropia yezoensis (Susabi-nori).